A 347-amino-acid polypeptide reads, in one-letter code: Phosphate acyltransferase (347 aa).

This sequence belongs to the PlsX family. In terms of assembly, homodimer. Probably interacts with PlsY.

It is found in the cytoplasm. The enzyme catalyses a fatty acyl-[ACP] + phosphate = an acyl phosphate + holo-[ACP]. The protein operates within lipid metabolism; phospholipid metabolism. Its function is as follows. Catalyzes the reversible formation of acyl-phosphate (acyl-PO(4)) from acyl-[acyl-carrier-protein] (acyl-ACP). This enzyme utilizes acyl-ACP as fatty acyl donor, but not acyl-CoA. This Lawsonia intracellularis (strain PHE/MN1-00) protein is Phosphate acyltransferase.